A 257-amino-acid polypeptide reads, in one-letter code: UPF0246 protein HAPS_0280 (257 aa).

The protein belongs to the UPF0246 family.

The chain is UPF0246 protein HAPS_0280 from Glaesserella parasuis serovar 5 (strain SH0165) (Haemophilus parasuis).